The primary structure comprises 405 residues: Bestrophin homolog 14 (405 aa).

4 consecutive transmembrane segments (helical) span residues 28 to 48, 63 to 83, 223 to 243, and 256 to 276; these read LIGF…LLDE, IGAQ…LIVA, LVYT…CLIG, and EITI…LGWL.

This sequence belongs to the anion channel-forming bestrophin (TC 1.A.46) family. Calcium-sensitive chloride channel subfamily.

The protein localises to the membrane. This Caenorhabditis elegans protein is Bestrophin homolog 14 (best-14).